Here is a 127-residue protein sequence, read N- to C-terminus: Cold-regulated protein 1 (127 aa).

A disordered region spans residues 39–127 (ARGPPPSPAP…WTRPRMARAR (89 aa)). The segment covering 85–101 (SRRRRRRRATRRARSRM) has biased composition (basic residues). Over residues 102–121 (PRTTPWRAPRAPARAWWTRP) the composition is skewed to low complexity.

This is Cold-regulated protein 1 from Hordeum vulgare (Barley).